Consider the following 236-residue polypeptide: Small ribosomal subunit protein uS3 (236 aa).

The region spanning 39 to 107 (IREFLTEELK…DTSLNIVEVR (69 aa)) is the KH type-2 domain. The tract at residues 214 to 236 (ASERRAVEGDNQGSSSNRRRENA) is disordered.

The protein belongs to the universal ribosomal protein uS3 family. As to quaternary structure, part of the 30S ribosomal subunit. Forms a tight complex with proteins S10 and S14.

Functionally, binds the lower part of the 30S subunit head. Binds mRNA in the 70S ribosome, positioning it for translation. In Brucella suis (strain ATCC 23445 / NCTC 10510), this protein is Small ribosomal subunit protein uS3.